Reading from the N-terminus, the 94-residue chain is Integration host factor subunit beta (94 aa).

Belongs to the bacterial histone-like protein family. As to quaternary structure, heterodimer of an alpha and a beta chain.

Functionally, this protein is one of the two subunits of integration host factor, a specific DNA-binding protein that functions in genetic recombination as well as in transcriptional and translational control. In Vibrio campbellii (strain ATCC BAA-1116), this protein is Integration host factor subunit beta.